Reading from the N-terminus, the 418-residue chain is Gamma-glutamyl phosphate reductase (418 aa).

It belongs to the gamma-glutamyl phosphate reductase family.

It localises to the cytoplasm. It catalyses the reaction L-glutamate 5-semialdehyde + phosphate + NADP(+) = L-glutamyl 5-phosphate + NADPH + H(+). Its pathway is amino-acid biosynthesis; L-proline biosynthesis; L-glutamate 5-semialdehyde from L-glutamate: step 2/2. Functionally, catalyzes the NADPH-dependent reduction of L-glutamate 5-phosphate into L-glutamate 5-semialdehyde and phosphate. The product spontaneously undergoes cyclization to form 1-pyrroline-5-carboxylate. The chain is Gamma-glutamyl phosphate reductase from Pelobacter propionicus (strain DSM 2379 / NBRC 103807 / OttBd1).